A 37-amino-acid chain; its full sequence is Large ribosomal subunit protein bL36A (37 aa).

It belongs to the bacterial ribosomal protein bL36 family.

The chain is Large ribosomal subunit protein bL36A from Neisseria meningitidis serogroup C (strain 053442).